The sequence spans 40 residues: Photosystem II reaction center protein J (40 aa).

Residues isoleucine 8–phenylalanine 28 form a helical membrane-spanning segment.

Belongs to the PsbJ family. In terms of assembly, PSII is composed of 1 copy each of membrane proteins PsbA, PsbB, PsbC, PsbD, PsbE, PsbF, PsbH, PsbI, PsbJ, PsbK, PsbL, PsbM, PsbT, PsbX, PsbY, PsbZ, Psb30/Ycf12, at least 3 peripheral proteins of the oxygen-evolving complex and a large number of cofactors. It forms dimeric complexes.

The protein resides in the plastid membrane. Its function is as follows. One of the components of the core complex of photosystem II (PSII). PSII is a light-driven water:plastoquinone oxidoreductase that uses light energy to abstract electrons from H(2)O, generating O(2) and a proton gradient subsequently used for ATP formation. It consists of a core antenna complex that captures photons, and an electron transfer chain that converts photonic excitation into a charge separation. The polypeptide is Photosystem II reaction center protein J (Cuscuta reflexa (Southern Asian dodder)).